An 82-amino-acid chain; its full sequence is Small ribosomal subunit protein bS16 (82 aa).

Belongs to the bacterial ribosomal protein bS16 family.

The sequence is that of Small ribosomal subunit protein bS16 from Aeromonas salmonicida (strain A449).